A 75-amino-acid polypeptide reads, in one-letter code: Putative sulfur carrier protein MJ0990 (75 aa).

Cys15 serves as the catalytic Cysteine persulfide intermediate.

This sequence belongs to the sulfur carrier protein TusA family.

This chain is Putative sulfur carrier protein MJ0990, found in Methanocaldococcus jannaschii (strain ATCC 43067 / DSM 2661 / JAL-1 / JCM 10045 / NBRC 100440) (Methanococcus jannaschii).